The chain runs to 262 residues: Sulfur carrier protein FdhD (262 aa).

The active-site Cysteine persulfide intermediate is Cys-105. Mo-bis(molybdopterin guanine dinucleotide) is bound at residue 246-251 (FVRKNR).

This sequence belongs to the FdhD family.

It localises to the cytoplasm. Its function is as follows. Required for formate dehydrogenase (FDH) activity. Acts as a sulfur carrier protein that transfers sulfur from IscS to the molybdenum cofactor prior to its insertion into FDH. The chain is Sulfur carrier protein FdhD from Picrophilus torridus (strain ATCC 700027 / DSM 9790 / JCM 10055 / NBRC 100828 / KAW 2/3).